The sequence spans 413 residues: Arginine biosynthesis bifunctional protein ArgJ (413 aa).

Residues Thr-163, Lys-189, Thr-200, Glu-286, Asn-408, and Thr-413 each contribute to the substrate site. The active-site Nucleophile is Thr-200.

It belongs to the ArgJ family. In terms of assembly, heterotetramer of two alpha and two beta chains.

It localises to the cytoplasm. The enzyme catalyses N(2)-acetyl-L-ornithine + L-glutamate = N-acetyl-L-glutamate + L-ornithine. The catalysed reaction is L-glutamate + acetyl-CoA = N-acetyl-L-glutamate + CoA + H(+). It participates in amino-acid biosynthesis; L-arginine biosynthesis; L-ornithine and N-acetyl-L-glutamate from L-glutamate and N(2)-acetyl-L-ornithine (cyclic): step 1/1. The protein operates within amino-acid biosynthesis; L-arginine biosynthesis; N(2)-acetyl-L-ornithine from L-glutamate: step 1/4. In terms of biological role, catalyzes two activities which are involved in the cyclic version of arginine biosynthesis: the synthesis of N-acetylglutamate from glutamate and acetyl-CoA as the acetyl donor, and of ornithine by transacetylation between N(2)-acetylornithine and glutamate. This is Arginine biosynthesis bifunctional protein ArgJ from Staphylococcus aureus (strain COL).